A 456-amino-acid polypeptide reads, in one-letter code: Probable glycine dehydrogenase (decarboxylating) subunit 1 (456 aa).

The protein belongs to the GcvP family. N-terminal subunit subfamily. As to quaternary structure, the glycine cleavage system is composed of four proteins: P, T, L and H. In this organism, the P 'protein' is a heterodimer of two subunits.

The catalysed reaction is N(6)-[(R)-lipoyl]-L-lysyl-[glycine-cleavage complex H protein] + glycine + H(+) = N(6)-[(R)-S(8)-aminomethyldihydrolipoyl]-L-lysyl-[glycine-cleavage complex H protein] + CO2. Functionally, the glycine cleavage system catalyzes the degradation of glycine. The P protein binds the alpha-amino group of glycine through its pyridoxal phosphate cofactor; CO(2) is released and the remaining methylamine moiety is then transferred to the lipoamide cofactor of the H protein. The protein is Probable glycine dehydrogenase (decarboxylating) subunit 1 of Legionella pneumophila (strain Paris).